Here is a 527-residue protein sequence, read N- to C-terminus: Tyrosine-protein kinase TXK (527 aa).

Residues Asp-35 to Glu-79 form a disordered region. The segment covering Ser-51–Val-64 has biased composition (polar residues). Residues Lys-68–Pro-73 carry the Nuclear localization signal motif. An SH3 domain is found at Glu-82–Ile-142. A Phosphotyrosine; by autocatalysis modification is found at Tyr-91. The 97-residue stretch at Trp-150–Val-246 folds into the SH2 domain. The region spanning Leu-271–Trp-527 is the Protein kinase domain. Residues Ile-277–Val-285 and Lys-299 each bind ATP. Asp-390 acts as the Proton acceptor in catalysis. Tyr-420 is modified (phosphotyrosine; by FYN and autocatalysis).

This sequence belongs to the protein kinase superfamily. Tyr protein kinase family. TEC subfamily. In terms of assembly, interacts with PARP1 and EEF1A1. Interacts with SH2D2A. Interacts with FYN. Phosphorylated at Tyr-420 by FYN. Autophosphorylation at Tyr-91 is critical for the activation of TXK, leading to the up-regulation of IFN-gamma gene transcription. In terms of processing, the cysteine string at the N-terminus is palmitoylated and required for the proper subcellular location. As to expression, expressed in T-cells and some myeloid cell lines. Expressed in Th1/Th0 cells with IFN-gamma-producing potential.

It is found in the cytoplasm. The protein localises to the nucleus. The protein resides in the cell membrane. The enzyme catalyses L-tyrosyl-[protein] + ATP = O-phospho-L-tyrosyl-[protein] + ADP + H(+). Activated by phosphorylation by FYN. Non-receptor tyrosine kinase that plays a redundant role with ITK in regulation of the adaptive immune response. Regulates the development, function and differentiation of conventional T-cells and nonconventional NKT-cells. When antigen presenting cells (APC) activate T-cell receptor (TCR), a series of phosphorylation leads to the recruitment of TXK to the cell membrane, where it is phosphorylated at Tyr-420. Phosphorylation leads to TXK full activation. Also contributes to signaling from many receptors and participates in multiple downstream pathways, including regulation of the actin cytoskeleton. Like ITK, can phosphorylate PLCG1, leading to its localization in lipid rafts and activation, followed by subsequent cleavage of its substrates. In turn, the endoplasmic reticulum releases calcium in the cytoplasm and the nuclear activator of activated T-cells (NFAT) translocates into the nucleus to perform its transcriptional duty. Plays a role in the positive regulation of IFNG transcription in T-helper 1 cells as part of an IFNG promoter-binding complex with PARP1 and EEF1A1. Within the complex, phosphorylates both PARP1 and EEF1A1. Also phosphorylates key sites in LCP2 leading to the up-regulation of Th1 preferred cytokine IL-2. Phosphorylates 'Tyr-201' of CTLA4 which leads to the association of PI-3 kinase with the CTLA4 receptor. The sequence is that of Tyrosine-protein kinase TXK (TXK) from Homo sapiens (Human).